We begin with the raw amino-acid sequence, 197 residues long: Pyridoxal 5'-phosphate synthase subunit PdxT (197 aa).

An L-glutamine-binding site is contributed by 52 to 54 (GES). Cys84 functions as the Nucleophile in the catalytic mechanism. L-glutamine contacts are provided by residues Arg116 and 143–144 (IR). Active-site charge relay system residues include His179 and Glu181.

This sequence belongs to the glutaminase PdxT/SNO family. In the presence of PdxS, forms a dodecamer of heterodimers. Only shows activity in the heterodimer.

It carries out the reaction aldehydo-D-ribose 5-phosphate + D-glyceraldehyde 3-phosphate + L-glutamine = pyridoxal 5'-phosphate + L-glutamate + phosphate + 3 H2O + H(+). It catalyses the reaction L-glutamine + H2O = L-glutamate + NH4(+). Its pathway is cofactor biosynthesis; pyridoxal 5'-phosphate biosynthesis. Functionally, catalyzes the hydrolysis of glutamine to glutamate and ammonia as part of the biosynthesis of pyridoxal 5'-phosphate. The resulting ammonia molecule is channeled to the active site of PdxS. This Ignicoccus hospitalis (strain KIN4/I / DSM 18386 / JCM 14125) protein is Pyridoxal 5'-phosphate synthase subunit PdxT.